A 446-amino-acid polypeptide reads, in one-letter code: Trigger factor (446 aa).

The PPIase FKBP-type domain maps to 182–267 (GDKVVVDYQN…VKNIFMMKAI (86 aa)).

Belongs to the FKBP-type PPIase family. Tig subfamily.

The protein resides in the cytoplasm. It carries out the reaction [protein]-peptidylproline (omega=180) = [protein]-peptidylproline (omega=0). Its function is as follows. Involved in protein export. Acts as a chaperone by maintaining the newly synthesized protein in an open conformation. Functions as a peptidyl-prolyl cis-trans isomerase. This Ehrlichia ruminantium (strain Gardel) protein is Trigger factor.